The primary structure comprises 23 residues: Laccase-1 (23 aa).

This sequence belongs to the multicopper oxidase family. Requires Cu cation as cofactor.

The protein resides in the secreted. It catalyses the reaction 4 hydroquinone + O2 = 4 benzosemiquinone + 2 H2O. With respect to regulation, strongly inhibited by sodium azide, sodium cyanide, Li(+), Sn(+), Hg(2+), and the disulfide-reducing agents beta-mercaptoethanol, dithiothreitol and thioglycolic acid. Moderately inhibited by Mn(2+) and Fe(2+), inhibition by these metal ions is stronger at 0.1 mM than at 1 mM. Moderately inhibited by Cu(2+). Its function is as follows. Lignin degradation and detoxification of lignin-derived products. Demethylates eucalyptus hard wood lignin. Has high activity against the non-phenolic heterocyclic compound ABTS, and lower activity against the phenolic substrates syringic acid, caffeic acid, syringaldazine, vanillic acid, catechol and levodihydroxyphenylalanine. The protein is Laccase-1 of Galerina sp.